Here is a 175-residue protein sequence, read N- to C-terminus: CDP-archaeol synthase (175 aa).

The next 4 membrane-spanning stretches (helical) occupy residues 41 to 61, 82 to 102, 122 to 142, and 150 to 170; these read GLFS…WLSS, LIVV…KSFF, FVVG…VSNF, and VIII…LIGV.

It belongs to the CDP-archaeol synthase family. The cofactor is Mg(2+).

It localises to the cell membrane. The catalysed reaction is 2,3-bis-O-(geranylgeranyl)-sn-glycerol 1-phosphate + CTP + H(+) = CDP-2,3-bis-O-(geranylgeranyl)-sn-glycerol + diphosphate. It participates in membrane lipid metabolism; glycerophospholipid metabolism. Functionally, catalyzes the formation of CDP-2,3-bis-(O-geranylgeranyl)-sn-glycerol (CDP-archaeol) from 2,3-bis-(O-geranylgeranyl)-sn-glycerol 1-phosphate (DGGGP) and CTP. This reaction is the third ether-bond-formation step in the biosynthesis of archaeal membrane lipids. This is CDP-archaeol synthase from Methanosarcina barkeri (strain Fusaro / DSM 804).